Reading from the N-terminus, the 545-residue chain is CTP synthase (545 aa).

Positions 1–266 are amidoligase domain; the sequence is MKTKFIFITG…DQKIAIMLKL (266 aa). Serine 14 contributes to the CTP binding site. Residue serine 14 coordinates UTP. ATP-binding positions include 15–20 and aspartate 72; that span reads SLGKGL. Aspartate 72 and glutamate 140 together coordinate Mg(2+). Residues 147 to 149, 187 to 192, and lysine 223 contribute to the CTP site; these read DIE and KTKPTQ. Residues 187–192 and lysine 223 contribute to the UTP site; that span reads KTKPTQ. Residues 291-545 enclose the Glutamine amidotransferase type-1 domain; sequence TIGIVGKYVD…IKASCENKNK (255 aa). Residue glycine 353 participates in L-glutamine binding. Residue cysteine 380 is the Nucleophile; for glutamine hydrolysis of the active site. Residues 381 to 384, glutamate 404, and arginine 472 contribute to the L-glutamine site; that span reads LGMQ. Catalysis depends on residues histidine 518 and glutamate 520.

This sequence belongs to the CTP synthase family. As to quaternary structure, homotetramer.

It catalyses the reaction UTP + L-glutamine + ATP + H2O = CTP + L-glutamate + ADP + phosphate + 2 H(+). The catalysed reaction is L-glutamine + H2O = L-glutamate + NH4(+). It carries out the reaction UTP + NH4(+) + ATP = CTP + ADP + phosphate + 2 H(+). It functions in the pathway pyrimidine metabolism; CTP biosynthesis via de novo pathway; CTP from UDP: step 2/2. Its activity is regulated as follows. Allosterically activated by GTP, when glutamine is the substrate; GTP has no effect on the reaction when ammonia is the substrate. The allosteric effector GTP functions by stabilizing the protein conformation that binds the tetrahedral intermediate(s) formed during glutamine hydrolysis. Inhibited by the product CTP, via allosteric rather than competitive inhibition. In terms of biological role, catalyzes the ATP-dependent amination of UTP to CTP with either L-glutamine or ammonia as the source of nitrogen. Regulates intracellular CTP levels through interactions with the four ribonucleotide triphosphates. The sequence is that of CTP synthase from Maridesulfovibrio salexigens (strain ATCC 14822 / DSM 2638 / NCIMB 8403 / VKM B-1763) (Desulfovibrio salexigens).